We begin with the raw amino-acid sequence, 343 residues long: Protein RecA (343 aa).

66–73 (GPESSGKT) contributes to the ATP binding site.

The protein belongs to the RecA family.

The protein resides in the cytoplasm. In terms of biological role, can catalyze the hydrolysis of ATP in the presence of single-stranded DNA, the ATP-dependent uptake of single-stranded DNA by duplex DNA, and the ATP-dependent hybridization of homologous single-stranded DNAs. It interacts with LexA causing its activation and leading to its autocatalytic cleavage. The sequence is that of Protein RecA from Nitrosomonas eutropha (strain DSM 101675 / C91 / Nm57).